The primary structure comprises 355 residues: Probable tRNA-dihydrouridine synthase 1 (355 aa).

FMN is bound by residues 48 to 50 (PLS) and Q102. The Proton donor role is filled by C132. Residues K171, 232-234 (NGD), and 256-257 (SR) each bind FMN.

This sequence belongs to the Dus family. FMN is required as a cofactor.

The catalysed reaction is a 5,6-dihydrouridine in tRNA + NAD(+) = a uridine in tRNA + NADH + H(+). It carries out the reaction a 5,6-dihydrouridine in tRNA + NADP(+) = a uridine in tRNA + NADPH + H(+). In terms of biological role, catalyzes the synthesis of 5,6-dihydrouridine (D), a modified base found in the D-loop of most tRNAs, via the reduction of the C5-C6 double bond in target uridines. The chain is Probable tRNA-dihydrouridine synthase 1 (dus1) from Synechocystis sp. (strain ATCC 27184 / PCC 6803 / Kazusa).